Here is a 277-residue protein sequence, read N- to C-terminus: Hydroxyethylthiazole kinase (277 aa).

Residue methionine 55 coordinates substrate. 2 residues coordinate ATP: arginine 130 and serine 176. Position 203 (glycine 203) interacts with substrate.

The protein belongs to the Thz kinase family. Mg(2+) is required as a cofactor.

The catalysed reaction is 5-(2-hydroxyethyl)-4-methylthiazole + ATP = 4-methyl-5-(2-phosphooxyethyl)-thiazole + ADP + H(+). The protein operates within cofactor biosynthesis; thiamine diphosphate biosynthesis; 4-methyl-5-(2-phosphoethyl)-thiazole from 5-(2-hydroxyethyl)-4-methylthiazole: step 1/1. Functionally, catalyzes the phosphorylation of the hydroxyl group of 4-methyl-5-beta-hydroxyethylthiazole (THZ). In Cutibacterium acnes (strain DSM 16379 / KPA171202) (Propionibacterium acnes), this protein is Hydroxyethylthiazole kinase.